A 116-amino-acid chain; its full sequence is Large ribosomal subunit protein bL20 (116 aa).

It belongs to the bacterial ribosomal protein bL20 family.

Functionally, binds directly to 23S ribosomal RNA and is necessary for the in vitro assembly process of the 50S ribosomal subunit. It is not involved in the protein synthesizing functions of that subunit. The polypeptide is Large ribosomal subunit protein bL20 (Helicobacter pylori (strain HPAG1)).